Here is a 462-residue protein sequence, read N- to C-terminus: Nitrate/nitrite transporter NarU (462 aa).

Topologically, residues 1-35 are cytoplasmic; that stretch reads MTRQNENYNRYLLSDWRPENPAFWENKGKGIARRN. A helical transmembrane segment spans residues 36-56; the sequence is LWISVSCLLLAFCVWMLFSAV. At 57-71 the chain is on the periplasmic side; sequence AVNLNKIGFNFTTDQ. The chain crosses the membrane as a helical span at residues 72–92; it reads LFLLTALPSLSGAILRVPYSF. The Cytoplasmic segment spans residues 93–101; that stretch reads MVPLFGGRK. The chain crosses the membrane as a helical span at residues 102–122; it reads WTVLSTVILIIPCAWLGFAVQ. Over 123-124 the chain is Periplasmic; it reads NP. Residues 125-145 form a helical membrane-spanning segment; sequence ATPFGVFMLIALLCGFAGANF. At 146-180 the chain is on the cytoplasmic side; sequence ASSMGNISFFFPKARQGSALGINGGLGNLGVSVMQ. A helical membrane pass occupies residues 181-201; that stretch reads LIAPLVIFLPIFTFLGVQGVP. Topologically, residues 202-206 are periplasmic; sequence QPDGS. Residues 207-227 traverse the membrane as a helical segment; that stretch reads LLALTNAAWIWVPLLAVATLA. Residues 228 to 258 are Cytoplasmic-facing; the sequence is AWFGMNDIGSSKASVASQLPVLKRLHLWLLS. The helical transmembrane segment at 259–279 threads the bilayer; that stretch reads LLYLATFGSFIGFSAGFAMLA. Residues 280 to 287 lie on the Periplasmic side of the membrane; it reads KTQFPDVN. The chain crosses the membrane as a helical span at residues 288–308; sequence ILQLAFFGPFIGALARSAGGV. The Cytoplasmic segment spans residues 309-317; the sequence is ISDKFGGVR. A helical membrane pass occupies residues 318-338; the sequence is VTLINFIFMALFTALLFLTLP. Over 339–341 the chain is Periplasmic; it reads GSG. A helical membrane pass occupies residues 342–362; sequence AGSFSAFYLVFMGLFLTAGLG. Residues 363 to 401 lie on the Cytoplasmic side of the membrane; the sequence is SGSTFQMIAVIFRQITLYNVKLRGGSDEQAQREAVTDTA. A helical membrane pass occupies residues 402–422; the sequence is AALGFISAIGAVGGFFIPKAF. The Periplasmic portion of the chain corresponds to 423–432; the sequence is GTSLALTGSP. Residues 433-453 traverse the membrane as a helical segment; that stretch reads VGAMKIFLLFYLACVLLTWLV. The Cytoplasmic segment spans residues 454–462; sequence YGRRKPKQQ.

The protein belongs to the major facilitator superfamily. Nitrate/nitrite porter (TC 2.A.1.8) family.

It localises to the cell inner membrane. Catalyzes nitrate uptake, nitrite uptake and nitrite export across the cytoplasmic membrane. This chain is Nitrate/nitrite transporter NarU (narU), found in Salmonella typhimurium (strain LT2 / SGSC1412 / ATCC 700720).